Here is a 354-residue protein sequence, read N- to C-terminus: Ferredoxin--NADP reductase (354 aa).

The FAD site is built by aspartate 42, glutamine 50, tyrosine 55, isoleucine 95, phenylalanine 130, aspartate 299, and threonine 339.

This sequence belongs to the ferredoxin--NADP reductase type 2 family. In terms of assembly, homodimer. It depends on FAD as a cofactor.

The enzyme catalyses 2 reduced [2Fe-2S]-[ferredoxin] + NADP(+) + H(+) = 2 oxidized [2Fe-2S]-[ferredoxin] + NADPH. The chain is Ferredoxin--NADP reductase from Acidovorax sp. (strain JS42).